We begin with the raw amino-acid sequence, 340 residues long: Heat-inducible transcription repressor HrcA (340 aa).

It belongs to the HrcA family.

Negative regulator of class I heat shock genes (grpE-dnaK-dnaJ and groELS operons). Prevents heat-shock induction of these operons. This chain is Heat-inducible transcription repressor HrcA, found in Mycoplasma mycoides subsp. mycoides SC (strain CCUG 32753 / NCTC 10114 / PG1).